Here is a 432-residue protein sequence, read N- to C-terminus: Adenylosuccinate synthetase (432 aa).

GTP contacts are provided by residues 13–19 (GDEGKGK) and 41–43 (GHT). Asp14 acts as the Proton acceptor in catalysis. Residues Asp14 and Gly41 each coordinate Mg(2+). IMP contacts are provided by residues 14 to 17 (DEGK), 39 to 42 (NAGH), Thr130, Arg144, Gln225, Thr240, and Arg304. His42 acts as the Proton donor in catalysis. 300–306 (ATTGRSR) is a substrate binding site. GTP is bound by residues Arg306, 332–334 (KLD), and 415–417 (STG).

It belongs to the adenylosuccinate synthetase family. In terms of assembly, homodimer. The cofactor is Mg(2+).

It is found in the cytoplasm. The enzyme catalyses IMP + L-aspartate + GTP = N(6)-(1,2-dicarboxyethyl)-AMP + GDP + phosphate + 2 H(+). It participates in purine metabolism; AMP biosynthesis via de novo pathway; AMP from IMP: step 1/2. In terms of biological role, plays an important role in the de novo pathway of purine nucleotide biosynthesis. Catalyzes the first committed step in the biosynthesis of AMP from IMP. The chain is Adenylosuccinate synthetase from Yersinia pestis bv. Antiqua (strain Antiqua).